We begin with the raw amino-acid sequence, 1059 residues long: Ubiquitin carboxyl-terminal hydrolase 36 (1059 aa).

2 disordered regions span residues 22 to 45 (LGGN…NGSL) and 102 to 145 (GKLV…KPKR). Positions 23–45 (GGNSSAGSSTDQAKSGEDTNGSL) are enriched in polar residues. Low complexity predominate over residues 121–138 (HPNNQSHHNHPHPTSNPN). The USP domain occupies 168-457 (TGMINVGNTC…NAYIMFFELD (290 aa)). The active-site Nucleophile is the Cys177. His416 functions as the Proton acceptor in the catalytic mechanism. 4 disordered regions span residues 464–512 (PPAN…YTNG), 554–853 (ATSA…VTSN), 941–1005 (RQRD…FYNQ), and 1022–1059 (FGGA…QQQT). Composition is skewed to low complexity over residues 479–494 (STTP…PSPT) and 561–580 (NGNK…KSIN). 2 positions are modified to phosphoserine: Ser490 and Ser492. Polar residues predominate over residues 603–615 (TTAQLPSMPNMTE). Thr632 and Thr636 each carry phosphothreonine. 2 positions are modified to phosphoserine: Ser646 and Ser648. Polar residues predominate over residues 673 to 702 (ESGQTNGHSKTNGSLTNGSASSSVHVNNSK). Over residues 703-720 (QKTDAIDEIFKSLKKSAD) the composition is skewed to basic and acidic residues. Ser721 carries the phosphoserine modification. Residues 721-730 (SEEDDDEEEP) show a composition bias toward acidic residues. Over residues 740-750 (PQKQSQSQSKA) the composition is skewed to low complexity. A compositionally biased stretch (pro residues) spans 751-760 (PPSPKTPPSP). At Ser753 the chain carries Phosphoserine. Thr756 is subject to Phosphothreonine. Ser759 carries the phosphoserine modification. The span at 779 to 788 (DAIDDDDDAV) shows a compositional bias: acidic residues. Thr799 is modified (phosphothreonine). Positions 806-818 (NPFSSSKPSTDSP) are enriched in polar residues. Position 817 is a phosphoserine (Ser817). Phosphothreonine is present on Thr820. Polar residues predominate over residues 833 to 853 (ALKSHQQPRVGNGYQSNVTSN). Over residues 963-974 (SGSAKGNNASNS) the composition is skewed to low complexity.

The protein belongs to the peptidase C19 family. Interacts with atms/PAF1, but not with CycT.

It is found in the nucleus. The protein localises to the nucleolus. The enzyme catalyses Thiol-dependent hydrolysis of ester, thioester, amide, peptide and isopeptide bonds formed by the C-terminal Gly of ubiquitin (a 76-residue protein attached to proteins as an intracellular targeting signal).. In terms of biological role, required for maintaining multiple types of adult stem cells, including male and female germline, epithelial follicle cell and intestinal stem cells. May function as a transcriptional repressor by continually deubiquiting histone H2B at the promoters of genes critical for cellular differentiation, thereby preventing histone H3 'Lys-4' trimethylation (H3K4). Controls selective autophagy activation by ubiquitinated proteins. The protein is Ubiquitin carboxyl-terminal hydrolase 36 (Usp36) of Drosophila sechellia (Fruit fly).